A 121-amino-acid polypeptide reads, in one-letter code: Large ribosomal subunit protein uL14 (121 aa).

This sequence belongs to the universal ribosomal protein uL14 family. In terms of assembly, part of the 50S ribosomal subunit. Forms a cluster with proteins L3 and L19. In the 70S ribosome, L14 and L19 interact and together make contacts with the 16S rRNA in bridges B5 and B8.

Binds to 23S rRNA. Forms part of two intersubunit bridges in the 70S ribosome. This Prochlorococcus marinus (strain MIT 9211) protein is Large ribosomal subunit protein uL14.